A 264-amino-acid chain; its full sequence is Hydroxyethylthiazole kinase (264 aa).

Met43 is a substrate binding site. ATP contacts are provided by Lys119 and Ser165. Residue Gly192 coordinates substrate.

The protein belongs to the Thz kinase family. Mg(2+) is required as a cofactor.

It catalyses the reaction 5-(2-hydroxyethyl)-4-methylthiazole + ATP = 4-methyl-5-(2-phosphooxyethyl)-thiazole + ADP + H(+). It participates in cofactor biosynthesis; thiamine diphosphate biosynthesis; 4-methyl-5-(2-phosphoethyl)-thiazole from 5-(2-hydroxyethyl)-4-methylthiazole: step 1/1. Its function is as follows. Catalyzes the phosphorylation of the hydroxyl group of 4-methyl-5-beta-hydroxyethylthiazole (THZ). The chain is Hydroxyethylthiazole kinase from Methanocorpusculum labreanum (strain ATCC 43576 / DSM 4855 / Z).